Here is a 426-residue protein sequence, read N- to C-terminus: Pregnancy-specific beta-1-glycoprotein 9 (426 aa).

Positions 1–34 (MGPLPAPSCTQRITWKGLLLTASLLNFWNPPTTA) are cleaved as a signal peptide. Residues 35-144 (EVTIEAQPPK…IRHFTFTLYL (110 aa)) form the Ig-like V-type domain. 2 N-linked (GlcNAc...) asparagine glycosylation sites follow: N104 and N111. A Cell attachment site motif is present at residues 127-129 (RGD). 3 Ig-like C2-type domains span residues 147 to 234 (PKPY…VTLN), 242 to 326 (PYIT…PVIL), and 335 to 410 (PRIY…KSMT). Disulfide bonds link C169-C217, C262-C310, and C354-C394. N-linked (GlcNAc...) asparagine glycosylation is found at N199, N268, N303, and N387.

It belongs to the immunoglobulin superfamily. CEA family. As to quaternary structure, interacts with latency-associated peptide; leading to TGFB1 activation.

The protein resides in the secreted. In terms of biological role, binds to the small latent transforming growth factor-beta complex, consisting of the N-terminal TGFB1 latency-associated peptide (LAP) and the mature form of TGFB1, thereby leading to the activation of TGFB1. The activation of TGFB1 leads to stimulation of naive CD4(+) T-cells to increase FoxP3 expression and to an increase in the number of FoxP3(+) regulatory T-cells. Induces the differentiation of a suppressive CD4(+)LAP(+)FoxP3(-) T-cell subset. Induces the secretion of TGFB1 in macrophages, but not in activated CD4(+) T-cells. May reduce the expression of several pro-inflammatory cytokines and chemokines by CD4(+) T-cells, including IL2 and IL6. This chain is Pregnancy-specific beta-1-glycoprotein 9 (PSG9), found in Homo sapiens (Human).